We begin with the raw amino-acid sequence, 88 residues long: MIASSVKAEVVKSNARSANDTGSPEVQVALLTARINELTPHFKQHAKDHHGRRGLLRMVSRRRKLLDYLKSKDADRYTALIAKLGLRK.

A disordered region spans residues 1–23 (MIASSVKAEVVKSNARSANDTGS). A compositionally biased stretch (polar residues) spans 14 to 23 (NARSANDTGS).

The protein belongs to the universal ribosomal protein uS15 family. As to quaternary structure, part of the 30S ribosomal subunit. Forms a bridge to the 50S subunit in the 70S ribosome, contacting the 23S rRNA.

One of the primary rRNA binding proteins, it binds directly to 16S rRNA where it helps nucleate assembly of the platform of the 30S subunit by binding and bridging several RNA helices of the 16S rRNA. Functionally, forms an intersubunit bridge (bridge B4) with the 23S rRNA of the 50S subunit in the ribosome. This is Small ribosomal subunit protein uS15 from Delftia acidovorans (strain DSM 14801 / SPH-1).